The sequence spans 350 residues: GTPase Obg (350 aa).

Residues 1-159 (MKFLDQAKIY…RWIWLRLKLI (159 aa)) form the Obg domain. Positions 160 to 328 (ADVGLVGLPN…VLRLLQDRVT (169 aa)) constitute an OBG-type G domain. Residues 166–173 (GLPNAGKS), 191–195 (FTTLH), 213–216 (DIPG), 280–283 (NKID), and 309–311 (SGV) each bind GTP. Mg(2+) contacts are provided by Ser-173 and Thr-193. The tract at residues 331-350 (REAARDAAPPQAAAGREETA) is disordered.

The protein belongs to the TRAFAC class OBG-HflX-like GTPase superfamily. OBG GTPase family. In terms of assembly, monomer. Mg(2+) is required as a cofactor.

The protein resides in the cytoplasm. Functionally, an essential GTPase which binds GTP, GDP and possibly (p)ppGpp with moderate affinity, with high nucleotide exchange rates and a fairly low GTP hydrolysis rate. Plays a role in control of the cell cycle, stress response, ribosome biogenesis and in those bacteria that undergo differentiation, in morphogenesis control. This chain is GTPase Obg, found in Gluconacetobacter diazotrophicus (strain ATCC 49037 / DSM 5601 / CCUG 37298 / CIP 103539 / LMG 7603 / PAl5).